A 1203-amino-acid polypeptide reads, in one-letter code: Cingulin (1203 aa).

The head stretch occupies residues 7 to 357; sequence MAEPRGPVDH…VMVSSGSTKA (351 aa). Residues 25–48 are disordered; the sequence is EPVSGAEMGTLRRGGRRPAKDARA. A ZIM motif is present at residues 48–62; the sequence is ASTYGVAVRVQGIAG. Positions 54-67 are interaction with TJP1/ZO1; it reads AVRVQGIAGQPFVV. The interval 89–127 is disordered; sequence GASGALSSDLELPENPYSQVKGFPAPSQSSTSDEEPGAY. Serine 95, serine 96, serine 135, serine 137, serine 140, serine 155, serine 165, serine 214, serine 217, serine 258, serine 276, serine 338, and serine 351 each carry phosphoserine. Positions 186 to 266 are disordered; that stretch reads DSQLGGQARG…LSPLSGFSRS (81 aa). Over residues 207–231 the composition is skewed to basic and acidic residues; it reads EQRKRSKSLDSRLPRDTFEERERQS. The segment covering 232 to 266 has biased composition (polar residues); it reads TNHWTSSTKYDNHVGTSKQPAQSQNLSPLSGFSRS. The stretch at 358 to 1160 forms a coiled coil; sequence VAGQGELTRK…SLEKDSWRKA (803 aa). Residue lysine 579 is modified to N6-acetyllysine. A Phosphothreonine modification is found at threonine 712. Disordered stretches follow at residues 1034-1053 and 1154-1181; these read LASS…LESQ and KDSW…EEFD. A compositionally biased stretch (low complexity) spans 1044–1053; sequence SASLSQLESQ. The tail stretch occupies residues 1161-1203; that stretch reads SRSAAESALKNEGLSSDEEFDSVYDPSSIASLLTESNLQTSSC. Serine 1175, serine 1176, and serine 1182 each carry phosphoserine.

The protein belongs to the cingulin family. Homodimer. Interacts with TJP1/ZO1. Interacts with SPEF1. As to expression, localized on the cytoplasmic face of tight junctions of polarized epithelia and some endothelia. Expressed in pancreas, kidney, liver and lung, but not in skeletal muscle, placenta, brain or heart.

It localises to the cell junction. The protein localises to the tight junction. In terms of biological role, probably plays a role in the formation and regulation of the tight junction (TJ) paracellular permeability barrier. The sequence is that of Cingulin from Homo sapiens (Human).